The chain runs to 480 residues: Protein nucleotidyltransferase YdiU (480 aa).

ATP-binding residues include glycine 86, glycine 88, arginine 89, lysine 109, aspartate 121, glycine 122, arginine 172, and arginine 179. Aspartate 248 serves as the catalytic Proton acceptor. 2 residues coordinate Mg(2+): asparagine 249 and aspartate 258. Position 258 (aspartate 258) interacts with ATP.

The protein belongs to the SELO family. Mg(2+) serves as cofactor. It depends on Mn(2+) as a cofactor.

The catalysed reaction is L-seryl-[protein] + ATP = 3-O-(5'-adenylyl)-L-seryl-[protein] + diphosphate. The enzyme catalyses L-threonyl-[protein] + ATP = 3-O-(5'-adenylyl)-L-threonyl-[protein] + diphosphate. It carries out the reaction L-tyrosyl-[protein] + ATP = O-(5'-adenylyl)-L-tyrosyl-[protein] + diphosphate. It catalyses the reaction L-histidyl-[protein] + UTP = N(tele)-(5'-uridylyl)-L-histidyl-[protein] + diphosphate. The catalysed reaction is L-seryl-[protein] + UTP = O-(5'-uridylyl)-L-seryl-[protein] + diphosphate. The enzyme catalyses L-tyrosyl-[protein] + UTP = O-(5'-uridylyl)-L-tyrosyl-[protein] + diphosphate. Its function is as follows. Nucleotidyltransferase involved in the post-translational modification of proteins. It can catalyze the addition of adenosine monophosphate (AMP) or uridine monophosphate (UMP) to a protein, resulting in modifications known as AMPylation and UMPylation. This chain is Protein nucleotidyltransferase YdiU, found in Salmonella typhi.